The chain runs to 567 residues: Potassium-transporting ATPase potassium-binding subunit (567 aa).

12 consecutive transmembrane segments (helical) span residues 5–25 (GWLQ…PLGG), 64–84 (TTYS…LYFL), 136–156 (GFTV…IALI), 179–199 (LYVL…LGVP), 254–274 (ISNL…TNVF), 285–305 (WAIL…TYWA), 328–350 (VRFG…CGAV), 375–395 (IVGG…IAIF), 421–441 (MLAV…SVVL), 459–481 (ILYA…SANT), 486–506 (ITLG…ALAI), and 529–549 (LFVG…FFPA).

Belongs to the KdpA family. In terms of assembly, the system is composed of three essential subunits: KdpA, KdpB and KdpC.

The protein localises to the cell inner membrane. Its function is as follows. Part of the high-affinity ATP-driven potassium transport (or Kdp) system, which catalyzes the hydrolysis of ATP coupled with the electrogenic transport of potassium into the cytoplasm. This subunit binds the periplasmic potassium ions and delivers the ions to the membrane domain of KdpB through an intramembrane tunnel. In Rhizobium rhizogenes (strain K84 / ATCC BAA-868) (Agrobacterium radiobacter), this protein is Potassium-transporting ATPase potassium-binding subunit.